The chain runs to 883 residues: Alanine--tRNA ligase (883 aa).

Zn(2+) is bound by residues His-563, His-567, Cys-677, and His-681.

The protein belongs to the class-II aminoacyl-tRNA synthetase family. It depends on Zn(2+) as a cofactor.

It localises to the cytoplasm. The enzyme catalyses tRNA(Ala) + L-alanine + ATP = L-alanyl-tRNA(Ala) + AMP + diphosphate. Catalyzes the attachment of alanine to tRNA(Ala) in a two-step reaction: alanine is first activated by ATP to form Ala-AMP and then transferred to the acceptor end of tRNA(Ala). Also edits incorrectly charged Ser-tRNA(Ala) and Gly-tRNA(Ala) via its editing domain. This chain is Alanine--tRNA ligase, found in Cereibacter sphaeroides (strain ATCC 17023 / DSM 158 / JCM 6121 / CCUG 31486 / LMG 2827 / NBRC 12203 / NCIMB 8253 / ATH 2.4.1.) (Rhodobacter sphaeroides).